Here is a 491-residue protein sequence, read N- to C-terminus: Delayed-rectifier potassium channel regulatory subunit KCNS3 (491 aa).

Over 1 to 182 (MVFGEFFHRP…IRMENPAYCL (182 aa)) the chain is Cytoplasmic. A helical transmembrane segment spans residues 183–204 (SAKLIAISSLSVVLASIVAMCV). Over 205–220 (HSMSEFQNEDGEVDDP) the chain is Extracellular. The chain crosses the membrane as a helical span at residues 221-243 (VLEGVEIACIAWFTGELAVRLAA). The Cytoplasmic portion of the chain corresponds to 244-254 (APCQKKFWKNP). The chain crosses the membrane as a helical span at residues 255 to 275 (LNIIDFVSIIPFYATLAVDTK). The Extracellular segment spans residues 276-285 (EEESEDIENM). The chain crosses the membrane as a helical; Voltage-sensor span at residues 286–306 (GKVVQILRLMRIFRILKLARH). Topologically, residues 307–321 (SVGLRSLGATLRHSY) are cytoplasmic. Residues 322 to 343 (HEVGLLLLFLSVGISIFSVLIY) form a helical membrane-spanning segment. Topologically, residues 344–357 (SVEKDDHTSSLTSI) are extracellular. The segment at residues 358 to 369 (PICWWWATISMT) is an intramembrane region (helical). The Selectivity filter signature appears at 370-375 (TVGYGD). An intramembrane segment occupies 370–377 (TVGYGDTH). Topologically, residues 378 to 384 (PVTLAGK) are extracellular. Residues 385–413 (LIASTCIICGILVVALPITIIFNKFSKYY) traverse the membrane as a helical segment. The Cytoplasmic portion of the chain corresponds to 414–491 (QKQKDIDVDQ…TTSLENCTAK (78 aa)).

It belongs to the potassium channel family. S (TC 1.A.1.2) subfamily. Kv9.3/KCNS3 sub-subfamily. As to quaternary structure, heterotetramer with KCNB1. Does not form homomultimers. As to expression, detected in whole normal term placental and placental chorionic plate arteries and veins. Detected in syncytiotrophoblast and in blood vessel endothelium within intermediate villi and chorionic plate (at protein level). Detected in most tissues, but not in peripheral blood lymphocytes. The highest levels of expression are in lung.

The protein localises to the cell membrane. Functionally, potassium channel regulatory subunit that modulates the delayed rectifier potassium channel activity of KCNB1 by namely slowing down the deactivation and inactivation time constants. While it does not form functional channel on its own, it can form functional heterotetrameric channels with KCNB1. This Homo sapiens (Human) protein is Delayed-rectifier potassium channel regulatory subunit KCNS3.